Here is a 129-residue protein sequence, read N- to C-terminus: Small ribosomal subunit protein uS11 (129 aa).

Belongs to the universal ribosomal protein uS11 family. As to quaternary structure, part of the 30S ribosomal subunit. Interacts with proteins S7 and S18. Binds to IF-3.

In terms of biological role, located on the platform of the 30S subunit, it bridges several disparate RNA helices of the 16S rRNA. Forms part of the Shine-Dalgarno cleft in the 70S ribosome. In Lysinibacillus sphaericus (strain C3-41), this protein is Small ribosomal subunit protein uS11.